The chain runs to 458 residues: Tubulin beta chain (458 aa).

The GTP site is built by glutamine 11, glutamate 69, serine 138, glycine 142, threonine 143, glycine 144, asparagine 204, and asparagine 226. Glutamate 69 contacts Mg(2+). A disordered region spans residues 426-458 (EAATVEGEEEEDEYAEGGVVNGDQSYDEPYQAA). The span at 431-440 (EGEEEEDEYA) shows a compositional bias: acidic residues.

Belongs to the tubulin family. Dimer of alpha and beta chains. A typical microtubule is a hollow water-filled tube with an outer diameter of 25 nm and an inner diameter of 15 nM. Alpha-beta heterodimers associate head-to-tail to form protofilaments running lengthwise along the microtubule wall with the beta-tubulin subunit facing the microtubule plus end conferring a structural polarity. Microtubules usually have 13 protofilaments but different protofilament numbers can be found in some organisms and specialized cells. Mg(2+) serves as cofactor.

It is found in the cytoplasm. It localises to the cytoskeleton. Tubulin is the major constituent of microtubules, a cylinder consisting of laterally associated linear protofilaments composed of alpha- and beta-tubulin heterodimers. Microtubules grow by the addition of GTP-tubulin dimers to the microtubule end, where a stabilizing cap forms. Below the cap, tubulin dimers are in GDP-bound state, owing to GTPase activity of alpha-tubulin. The protein is Tubulin beta chain (TUBB1) of Pyropia yezoensis (Susabi-nori).